The following is a 91-amino-acid chain: Small ribosomal subunit protein bS18 (91 aa).

This sequence belongs to the bacterial ribosomal protein bS18 family. As to quaternary structure, part of the 30S ribosomal subunit. Forms a tight heterodimer with protein bS6.

Functionally, binds as a heterodimer with protein bS6 to the central domain of the 16S rRNA, where it helps stabilize the platform of the 30S subunit. This Wolbachia pipientis wMel protein is Small ribosomal subunit protein bS18.